The following is a 372-amino-acid chain: MKQESPIKRRKSRQIMVGNVPVGGDAPIAVQSMTNTNTCDVDATVTQIKAIQEAGADIVRVSVPSMEAAEAFGKIRQQVSLPLVADIHFDYKIALRVAELGVDCLRINPGNIGRDDRVSAVISAARDRNIPIRIGVNAGSLEKALQRKYGEPTPEALVESAMRHIDILDKHDFQDFKVSLKASEVFMTVAAYRLIASQIEQPLHLGITEAGGFRSGTVKSSIGLGMLLMDGIGDTIRVSLAADPVQEIKVGFDILKSLRLRSRGINFIACPSCSRQNFDVIQTMNDLEARLEDVNTSMDVAIIGCIVNGPGEAKVADIGLTGGTPKNLFYMAGKPNQKLDNATLVDDLERLIREEVSRREDQDSAVIAKSSD.

[4Fe-4S] cluster-binding residues include Cys-270, Cys-273, Cys-305, and Glu-312.

This sequence belongs to the IspG family. Requires [4Fe-4S] cluster as cofactor.

It catalyses the reaction (2E)-4-hydroxy-3-methylbut-2-enyl diphosphate + oxidized [flavodoxin] + H2O + 2 H(+) = 2-C-methyl-D-erythritol 2,4-cyclic diphosphate + reduced [flavodoxin]. It functions in the pathway isoprenoid biosynthesis; isopentenyl diphosphate biosynthesis via DXP pathway; isopentenyl diphosphate from 1-deoxy-D-xylulose 5-phosphate: step 5/6. Its function is as follows. Converts 2C-methyl-D-erythritol 2,4-cyclodiphosphate (ME-2,4cPP) into 1-hydroxy-2-methyl-2-(E)-butenyl 4-diphosphate. The protein is 4-hydroxy-3-methylbut-2-en-1-yl diphosphate synthase (flavodoxin) of Marinobacter nauticus (strain ATCC 700491 / DSM 11845 / VT8) (Marinobacter aquaeolei).